The chain runs to 120 residues: NAD(P)H-quinone oxidoreductase subunit 3 (120 aa).

A run of 3 helical transmembrane segments spans residues 10–30 (FLGFLLIAAAVPILALVTNLI), 64–84 (MFALVFVIFDVETVFLYPWAV), and 89–109 (LGLLAFIEALIFIAILVIALA).

This sequence belongs to the complex I subunit 3 family. In terms of assembly, NDH-1 can be composed of about 15 different subunits; different subcomplexes with different compositions have been identified which probably have different functions.

It localises to the cellular thylakoid membrane. It catalyses the reaction a plastoquinone + NADH + (n+1) H(+)(in) = a plastoquinol + NAD(+) + n H(+)(out). The catalysed reaction is a plastoquinone + NADPH + (n+1) H(+)(in) = a plastoquinol + NADP(+) + n H(+)(out). NDH-1 shuttles electrons from an unknown electron donor, via FMN and iron-sulfur (Fe-S) centers, to quinones in the respiratory and/or the photosynthetic chain. The immediate electron acceptor for the enzyme in this species is believed to be plastoquinone. Couples the redox reaction to proton translocation, and thus conserves the redox energy in a proton gradient. Cyanobacterial NDH-1 also plays a role in inorganic carbon-concentration. The chain is NAD(P)H-quinone oxidoreductase subunit 3 from Prochlorococcus marinus (strain MIT 9215).